Consider the following 137-residue polypeptide: Mediator of RNA polymerase II transcription subunit 21 (137 aa).

Residues 37-56 (PKDTIAPSKADQPPEVDTLP) form a disordered region. The stretch at 87–130 (GLDNSEQDQLQSIKELEEELNVAEKQRQEAVKEKDEVLVKLDQT) forms a coiled coil.

The protein belongs to the Mediator complex subunit 21 family. As to quaternary structure, component of the Mediator complex.

It localises to the nucleus. Functionally, component of the Mediator complex, a coactivator involved in the regulated transcription of nearly all RNA polymerase II-dependent genes. Mediator functions as a bridge to convey information from gene-specific regulatory proteins to the basal RNA polymerase II transcription machinery. Mediator is recruited to promoters by direct interactions with regulatory proteins and serves as a scaffold for the assembly of a functional preinitiation complex with RNA polymerase II and the general transcription factors. This is Mediator of RNA polymerase II transcription subunit 21 (srb-7) from Neurospora crassa (strain ATCC 24698 / 74-OR23-1A / CBS 708.71 / DSM 1257 / FGSC 987).